The chain runs to 193 residues: Xanthine phosphoribosyltransferase (193 aa).

Xanthine contacts are provided by Leu20 and Thr27. Residue 128 to 132 participates in 5-phospho-alpha-D-ribose 1-diphosphate binding; that stretch reads ANGQA. Lys156 contacts xanthine.

The protein belongs to the purine/pyrimidine phosphoribosyltransferase family. Xpt subfamily. Homodimer.

Its subcellular location is the cytoplasm. It catalyses the reaction XMP + diphosphate = xanthine + 5-phospho-alpha-D-ribose 1-diphosphate. It functions in the pathway purine metabolism; XMP biosynthesis via salvage pathway; XMP from xanthine: step 1/1. Converts the preformed base xanthine, a product of nucleic acid breakdown, to xanthosine 5'-monophosphate (XMP), so it can be reused for RNA or DNA synthesis. The protein is Xanthine phosphoribosyltransferase of Streptococcus pneumoniae (strain P1031).